The following is a 908-amino-acid chain: WD repeat-containing protein 44 (908 aa).

The tract at residues 1–163 (MMPLKMCTWG…SSADQLDASK (163 aa)) is binding activity. Residues Ser17, Ser40, Ser61, Ser71, Ser86, and Ser116 each carry the phosphoserine modification. Composition is skewed to polar residues over residues 108-120 (QQGSRKADSQNAA) and 148-157 (NNLTEVSSAD). Disordered regions lie at residues 108–158 (QQGS…SADQ), 202–273 (APAK…KDNI), 309–341 (TAQENGKAPDVQTVAGEVMGPQRPRSNSGRELT), 391–418 (VSNDATQSDDEEKLQSQQTDTDGGRLKQ), and 454–474 (DEVFHTDQDDPSSSDDEGMPY). Thr151 and Thr211 each carry phosphothreonine. An important for interaction with ARHGAP26 AND ARHGAP10 region spans residues 203 to 249 (PAKPPRHLTPEPDIVASTKKPVPARPPPPTNFPPPRPPPPSRPAPPP). Residues 225–248 (PARPPPPTNFPPPRPPPPSRPAPP) show a composition bias toward pro residues. Ser254 carries the post-translational modification Phosphoserine. The segment covering 254–270 (SDLEFEALKTPDLDVPK) has biased composition (basic and acidic residues). Thr263 is subject to Phosphothreonine. Positions 326–339 (VMGPQRPRSNSGRE) are important for interaction with RAB11A. A phosphoserine mark is found at Ser334 and Ser336. A phosphothreonine mark is found at Thr341 and Thr396. Ser398, Ser465, Ser466, and Ser467 each carry phosphoserine. The segment covering 462 to 471 (DDPSSSDDEG) has biased composition (acidic residues). The residue at position 474 (Tyr474) is a Phosphotyrosine. The WD 1 repeat unit spans residues 504–543 (EHMGAVWTMKFSHCGRLLASAGQDNIVRIWALKNAFDYFN). Residues 552 to 587 (EGRVSPSPSQESLSSSKSDTDMGVCSGTDEDPDDKN) form a disordered region. Ser556 and Ser560 each carry phosphoserine. Residues 556-568 (SPSPSQESLSSSK) are compositionally biased toward low complexity. 5 WD repeats span residues 600–638 (GHTADLLDLSWSKNYFLLSSSMDKTVRLWHISRRECLCC), 640–680 (QHID…VALW), 685–724 (GQTKLITAANFCQNGKYAVIGTYDGRCIFYDTEHLKYHTQ), 735–774 (KVGRKITGIEPLPGENKILVTSNDSRIRLYDLRDLSLSMK), and 779–818 (VNSSSQIKASFSHDFTYLVSGSEDKYVYIWSTYHDLSKFT).

In terms of assembly, interacts preferentially with the GTP-bound form of RAB11 when membrane-associated. Interacts with GRAF1/ARHGAP26 or GRAF2/ARHGAP10; the interaction connects the endoplasmic reticulum (ER) with the endosomal tubule. Interacts with VAPA (via MSP domain) or VAPB (via MSP domain); the interaction connects the ER with the endosomal tubule. Does not bind to other Rab and Rho small G proteins. In terms of processing, phosphorylated by ATK1; the phosphorylation stabilizes its interaction with RAB11A and RAB11B. In terms of tissue distribution, expressed in heart; brain; spleen; lung; liver; muscle and kidney.

It localises to the cytoplasm. Its subcellular location is the cytosol. The protein resides in the perinuclear region. The protein localises to the endosome membrane. It is found in the golgi apparatus. It localises to the trans-Golgi network. Its function is as follows. Downstream effector for Rab11 which regulates Rab11 intracellular membrane trafficking functions such as endocytic recycling, intracellular ciliogenesis and protein export. ATK1-mediated phosphorylation of WDR44 induces binding to Rab11 which activates endocytic recycling of transferrin receptor back to the plasma membrane. When bound to Rab11, prevents the formation of the ciliogenic Rab11-Rabin8/RAB3IP-RAB11FIP3 complex, therefore inhibiting preciliary trafficking and ciliogenesis. May participate in neo-synthesized protein export by connecting the endoplasmic reticulum (ER) with the endosomal tubule via direct interactions with the integral ER proteins VAPA or VAPB and the endosomal protein GRAFs (GRAF1/ARHGAP26 or GRAF2/ARHGAP10), which facilitates the transfer of proteins such as E-cadherin, MPP14 and CFTR into a Rab8-Rab10-Rab11-dependent export route. The sequence is that of WD repeat-containing protein 44 from Rattus norvegicus (Rat).